The following is a 431-amino-acid chain: Cleavage stimulation factor subunit 1 (431 aa).

6 WD repeats span residues 106 to 145 (SHKG…AKSA), 171 to 210 (DHVD…AKRA), 215 to 254 (QEAE…CFVS), 260 to 301 (QHTD…TTFE), 303 to 343 (AHDG…TLVR), and 395 to 431 (GHNN…STTD).

As to quaternary structure, homodimer. The CSTF complex is composed of CSTF1 (50 kDa subunit), CSTF2 (64 kDa subunit) and CSTF3 (77 kDa subunit). Interacts (via repeats WD) directly with CSTF3. Interacts (via repeat WD6) with BARD1. Interacts with ERCC6.

It localises to the nucleus. One of the multiple factors required for polyadenylation and 3'-end cleavage of mammalian pre-mRNAs. May be responsible for the interaction of CSTF with other factors to form a stable complex on the pre-mRNA. The chain is Cleavage stimulation factor subunit 1 (Cstf1) from Mus musculus (Mouse).